We begin with the raw amino-acid sequence, 1088 residues long: MGKYNLILSEYLSFIYNSQSAVQIPIYYSSNSELENRCIEFHSKCLENSKNGLSLRKLFVEYNDVIENATLLSILSYSYDKYNAVERKLVKYAKGKPLEADLTVNELDYENNKMTSELFPTAEEYTDSLMDPAILTSLSSNLNAVMFWLEKHENDVAEKLKVYKRRLDLFTIVASTINKYGVPRHNAKYRYEYDVMKDKPYYLVTWANSSIEMLMSVFSHDDYLIAKELIVLSYSNRSTLAKLVSSPMSILVALVDINGTFITNEELELEFSNKYVRAIVPDQTFDELNQMLDNMRKAGLVDIPKMIQDWLVDRSIEKFPLMAKIYSWSFHVGFRKQKMLDAALDQLKTEYTENVDDEMYREYTMLIRDEVVKMLEEPVKHDDHLLRDSELAGLLSMSSASNGESRQLKFGRKTIFSTKKNMHVMDDMANERYTPGIIPPVNVDKPIPLGRRDVPGRRTRIIFILPYEYFIAQHAVVEKMLIYAKHTREYAEFYSQSNQLLSYGDVTRFLSNNTMVLYTDVSQWDSSQHNTQPFRKGIIMGLDILANMTNDAKVLQTLNLYKQTQINLMDSYVQIPDGNVIKKIQYGAVASGEKQTKAANSIANLALIKTVLSRISNKHSFATKIIRVDGDDNYAVLQFNTEVTKQMIQDVSNDVRETYARMNAKVKALVSTVGIEIAKRYIAGGKIFFRAGINLLNNEKRGQSTQWDQAAILYSNYIVNRLRGFETDREFILTKIMQMTSVAITGSLRLFPSERVLTTNSTFKVFDSEDFIIEYGTTVDEVYIQRAFMSLSSQKSGIADEIAASSTFKNYVTRLSEQLLFSKNNIVSRGIALTEKAKLNSYAPISLEKRRAQISALLTMLQKPVTFKSSKITINDILRDIKPFFTVSDAHLPIQYQKFMPTLPDNVQYIIQCIGSRTYQIEDDGSKSAISRLISKYSVYKPSIEELYKVISLHENEIQLYLISLGIPKIDADTYVGSKIYSRDKYRILESYVYNLLSINYGCYQLFDFNSPDLEKLIRIPFKGKIPAVTFILHLYAKLEVINYAIKNGSWISLFCNYPKSEMIKLWKKMWNITSLRSPYTNANFFQE.

The region spanning 501 to 687 is the RdRp catalytic domain; that stretch reads LSYGDVTRFL…AKRYIAGGKI (187 aa).

This sequence belongs to the reoviridae RNA-directed RNA polymerase family. Interacts with VP3 (Potential). Interacts with VP2; this interaction activates VP1. Interacts with NSP5; this interaction is probably necessary for the formation of functional virus factories. Interacts with NSP2; this interaction is weak. It depends on Mg(2+) as a cofactor.

The protein localises to the virion. The enzyme catalyses RNA(n) + a ribonucleoside 5'-triphosphate = RNA(n+1) + diphosphate. Its function is as follows. RNA-directed RNA polymerase that is involved in both transcription and genome replication. Together with VP3 capping enzyme, forms an enzyme complex positioned near the channels situated at each of the five-fold vertices of the core. Following infection, the outermost layer of the virus is lost, leaving a double-layered particle (DLP) made up of the core and VP6 shell. VP1 then catalyzes the transcription of fully conservative plus-strand genomic RNAs that are extruded through the DLP's channels into the cytoplasm where they function as mRNAs for translation of viral proteins. One copy of each of the viral (+)RNAs is also recruited during core assembly, together with newly synthesized polymerase complexes and VP2. The polymerase of these novo-formed particles catalyzes the synthesis of complementary minus-strands leading to dsRNA formation. To do so, the polymerase specifically recognizes and binds 4 bases 5'-UGUG-3' in the conserved 3'-sequence of plus-strand RNA templates. VP2 presumably activates the autoinhibited VP1-RNA complex to coordinate packaging and genome replication. Once dsRNA synthesis is complete, the polymerase switches to the transcriptional mode, thus providing secondary transcription. This is RNA-directed RNA polymerase from Rotavirus A (strain RVA/SA11-Patton/G3P[X]) (RV-A).